The following is a 281-amino-acid chain: Ribosomal protein L11 methyltransferase (281 aa).

Positions 133, 154, 175, and 216 each coordinate S-adenosyl-L-methionine.

This sequence belongs to the methyltransferase superfamily. PrmA family.

Its subcellular location is the cytoplasm. The enzyme catalyses L-lysyl-[protein] + 3 S-adenosyl-L-methionine = N(6),N(6),N(6)-trimethyl-L-lysyl-[protein] + 3 S-adenosyl-L-homocysteine + 3 H(+). Functionally, methylates ribosomal protein L11. The chain is Ribosomal protein L11 methyltransferase from Campylobacter jejuni subsp. jejuni serotype O:2 (strain ATCC 700819 / NCTC 11168).